Consider the following 306-residue polypeptide: Pantothenate kinase (306 aa).

91-98 (GSVAVGKS) is an ATP binding site.

This sequence belongs to the prokaryotic pantothenate kinase family.

It localises to the cytoplasm. The catalysed reaction is (R)-pantothenate + ATP = (R)-4'-phosphopantothenate + ADP + H(+). It participates in cofactor biosynthesis; coenzyme A biosynthesis; CoA from (R)-pantothenate: step 1/5. This is Pantothenate kinase from Streptococcus gordonii (strain Challis / ATCC 35105 / BCRC 15272 / CH1 / DL1 / V288).